A 34-amino-acid chain; its full sequence is Protamine-Z1/Z2 (34 aa).

The interval 1 to 34 (PRRRRRSSRPVRRRRRYRRSTAARRRRRVVRRRR) is disordered.

In terms of tissue distribution, testis.

It is found in the nucleus. It localises to the chromosome. Its function is as follows. Protamines substitute for histones in the chromatin of sperm during the haploid phase of spermatogenesis. They compact sperm DNA into a highly condensed, stable and inactive complex. This is Protamine-Z1/Z2 from Sarda orientalis (Striped bonito).